The primary structure comprises 92 residues: MTRSIKKGPFVADHLLKKIENLNLKKEKKIIITWSRASTIVPTMIGHTIAVHNGQEHLPIYITDRMVGHKLGEFAPTRTFRGHAKNDKKSRR.

Belongs to the universal ribosomal protein uS19 family.

The protein localises to the plastid. Its subcellular location is the chloroplast. Its function is as follows. Protein S19 forms a complex with S13 that binds strongly to the 16S ribosomal RNA. The polypeptide is Small ribosomal subunit protein uS19c (rps19) (Marchantia polymorpha (Common liverwort)).